A 342-amino-acid chain; its full sequence is N-acetyl-gamma-glutamyl-phosphate reductase (342 aa).

Cys-147 is a catalytic residue.

It belongs to the NAGSA dehydrogenase family. Type 1 subfamily.

The protein localises to the cytoplasm. It carries out the reaction N-acetyl-L-glutamate 5-semialdehyde + phosphate + NADP(+) = N-acetyl-L-glutamyl 5-phosphate + NADPH + H(+). The protein operates within amino-acid biosynthesis; L-arginine biosynthesis; N(2)-acetyl-L-ornithine from L-glutamate: step 3/4. Its function is as follows. Catalyzes the NADPH-dependent reduction of N-acetyl-5-glutamyl phosphate to yield N-acetyl-L-glutamate 5-semialdehyde. The protein is N-acetyl-gamma-glutamyl-phosphate reductase of Campylobacter jejuni subsp. doylei (strain ATCC BAA-1458 / RM4099 / 269.97).